Here is a 268-residue protein sequence, read N- to C-terminus: Glutamate racemase (268 aa).

Substrate contacts are provided by residues 10-11 (DS) and 42-43 (YG). Cys73 acts as the Proton donor/acceptor in catalysis. 74-75 (NT) serves as a coordination point for substrate. Cys184 functions as the Proton donor/acceptor in the catalytic mechanism. A substrate-binding site is contributed by 185–186 (TH).

It belongs to the aspartate/glutamate racemases family.

The enzyme catalyses L-glutamate = D-glutamate. It functions in the pathway cell wall biogenesis; peptidoglycan biosynthesis. In terms of biological role, provides the (R)-glutamate required for cell wall biosynthesis. In Carnobacterium sp. (strain St2), this protein is Glutamate racemase.